Reading from the N-terminus, the 505-residue chain is Sodium-coupled neutral amino acid transporter 3 (505 aa).

The interval 27–48 (VPTTDTQRTEDTQHCGEGKGFL) is disordered. Positions 33–43 (QRTEDTQHCGE) are enriched in basic and acidic residues. N-linked (GlcNAc...) asparagine glycosylation occurs at N73. 5 helical membrane-spanning segments follow: residues 82-102 (GILG…LFLL), 105-125 (VALL…IVGI), 143-163 (AAAL…LYII), 186-206 (MDGN…LALM), and 212-232 (LGYS…AVIY). C239 and C276 are joined by a disulfide. Residues N247 and N251 are each glycosylated (N-linked (GlcNAc...) asparagine). The chain crosses the membrane as a helical span at residues 288 to 308 (AYTIPIMAFAFVCHPEVLPIY). N324 carries N-linked (GlcNAc...) asparagine glycosylation. 5 helical membrane passes run 325-345 (LSIA…YLTF), 367-387 (ILCV…IVLF), 409-429 (VLIA…APNI), 432-452 (IFGI…PAIF), and 472-492 (ALCF…FIII).

Belongs to the amino acid/polyamine transporter 2 family. As to expression, expressed predominantly in liver, moderately expressed in kidney and brain, and barely detectable in heart and muscle. Within liver, expressed in hepatocytes. Not detected in testis. Expressed in cells of the ganglion cell layer, in soma of some cells of the inner nuclear layer (at protein level). Expressed in the inner segments of photoreceptor cells.

The protein localises to the cell membrane. Its subcellular location is the basolateral cell membrane. The catalysed reaction is L-histidine(out) + Na(+)(out) + H(+)(in) = L-histidine(in) + Na(+)(in) + H(+)(out). It catalyses the reaction L-glutamine(out) + Na(+)(out) + H(+)(in) = L-glutamine(in) + Na(+)(in) + H(+)(out). The enzyme catalyses L-asparagine(out) + Na(+)(out) + H(+)(in) = L-asparagine(in) + Na(+)(in) + H(+)(out). Functionally, symporter that cotransports specific neutral amino acids and sodium ions, coupled to an H(+) antiporter activity. Mainly participates in the glutamate-GABA-glutamine cycle in brain where it transports L-glutamine from astrocytes in the intercellular space for the replenishment of both neurotransmitters glutamate and gamma-aminobutyric acid (GABA) in neurons and also functions as the major influx transporter in ganglion cells mediating the uptake of glutamine. The transport activity is specific for L-glutamine, L-histidine and L-asparagine. The transport is electroneutral coupled to the cotransport of 1 Na(+) and the antiport of 1 H(+). The transport is pH dependent, saturable, Li(+) tolerant and functions in both direction depending on the concentration gradients of its substrates and cotransported ions. Also mediates an amino acid-gated H(+) conductance that is not stoichiometrically coupled to the amino acid transport but which influences the ionic gradients that drive the amino acid transport. In addition, may play a role in nitrogen metabolism, amino acid homeostasis, glucose metabolism and renal ammoniagenesis. The chain is Sodium-coupled neutral amino acid transporter 3 from Mus musculus (Mouse).